A 94-amino-acid chain; its full sequence is MARRCEVTGRGTVSGNNVSHSHIKTRRTWKVNLIKKRIFLEDENRWVTIRLSTRALRTLRKKGIKAAIKDNGGSLGVLAPKKYAGITKQAPKKA.

The interval 1–21 (MARRCEVTGRGTVSGNNVSHS) is disordered. Over residues 11-20 (GTVSGNNVSH) the composition is skewed to polar residues.

It belongs to the bacterial ribosomal protein bL28 family.

The chain is Large ribosomal subunit protein bL28 from Leptospira interrogans serogroup Icterohaemorrhagiae serovar copenhageni (strain Fiocruz L1-130).